The following is a 299-amino-acid chain: MSERKALLILHGKQALNEEVRAAVEARRAAGWDLQVRLTWEAGDAQRLVQEALAAGHTRLIAGGGDGTLRDIAEALANADAPASLVLLPLGTANDFARAAGVPLTPAAALDLLDVPARAIDLGEVGGQMFLNMATGGFGSQVTANTSEDLKKVLGGAAYLFTGLSRFAELSAAYGELQGPGFHWHGELLALGIGNGRQAGGGHELCPGALADDGLLDISILPAPQELVGTLKNLLAGGLGIDNLFVRARLPWVEIKASRGLDINLDGEPLQGDTLRFTARPGALRVHLPEDSPLLGGAR.

Residues 1-129 (MSERKALLIL…IDLGEVGGQM (129 aa)) form the DAGKc domain. ATP contacts are provided by residues T39, 65 to 71 (GDGTLRD), and T92. Mg(2+)-binding residues include L210, D213, and L215. E268 functions as the Proton acceptor in the catalytic mechanism.

The protein belongs to the diacylglycerol/lipid kinase family. YegS lipid kinase subfamily. Mg(2+) serves as cofactor. It depends on Ca(2+) as a cofactor.

It localises to the cytoplasm. Functionally, probably phosphorylates lipids; the in vivo substrate is unknown. The polypeptide is Probable lipid kinase YegS-like (Pseudomonas fluorescens (strain ATCC BAA-477 / NRRL B-23932 / Pf-5)).